Here is a 300-residue protein sequence, read N- to C-terminus: uncharacterized protein (300 aa).

Residues 10–67 enclose the HTH lysR-type domain; the sequence is FDLNLLVIFECIYQHLSISKAAESLYITPSAVSQSLQRLRAQFNDPLFIRSGKGIAPT. Residues 27-46 constitute a DNA-binding region (H-T-H motif); the sequence is ISKAAESLYITPSAVSQSLQ.

Belongs to the LysR transcriptional regulatory family.

This is an uncharacterized protein from Escherichia coli (strain K12).